A 741-amino-acid polypeptide reads, in one-letter code: Protein O-mannosyl-transferase TMTC4 (741 aa).

Over 1–10 the chain is Cytoplasmic; the sequence is MVELDADLDH. A helical transmembrane segment spans residues 11 to 31; sequence IVPSVLPPFWAKLVVGFVSLL. At 32 to 110 the chain is on the extracellular side; sequence CFARSYDGDF…FHPVGFHVVN (79 aa). Residue N77 is glycosylated (N-linked (GlcNAc...) asparagine). A helical membrane pass occupies residues 111 to 131; sequence ILLHGSISILMLDVFSVLFGG. The Cytoplasmic segment spans residues 132–146; that stretch reads LQYTGKGQRVHLAPR. The next 2 helical transmembrane spans lie at 147–166 and 167–185; these read ASLL…ECVA and GVVG…LSFL. Topologically, residues 186–198 are cytoplasmic; the sequence is GYCQAFKETGNKE. Residues 199–219 form a helical membrane-spanning segment; the sequence is GTHSSTFWVLLSIFLGAVAML. Over 220-224 the chain is Extracellular; that stretch reads CKEQG. A helical transmembrane segment spans residues 225–245; that stretch reads ITVLGLNAVFDILVIGKLDIL. Topologically, residues 246 to 265 are cytoplasmic; that stretch reads AAVRKVLHKDKSQENAGMFK. The chain crosses the membrane as a helical span at residues 266 to 286; the sequence is NGGLLFRIALLTIGGTSMLYI. The Extracellular portion of the chain corresponds to 287 to 354; sequence RWKIMGTGPP…PLIKSVGDWR (68 aa). Residues 355–375 traverse the membrane as a helical segment; the sequence is VIALAALWLCLIGLIFQALCS. Residues 376-382 are Cytoplasmic-facing; that stretch reads EDSCKRR. The chain crosses the membrane as a helical span at residues 383-403; it reads ILTLGLGFLVIPFLPASNLFF. Over 404 to 412 the chain is Extracellular; the sequence is RVGFVVAER. A helical transmembrane segment spans residues 413 to 433; sequence VLYLPSAGYCVLLTFGFGALS. Residues 434–441 are Cytoplasmic-facing; sequence RHTKKKKP. A helical transmembrane segment spans residues 442 to 462; that stretch reads VAAIILGILLINALRCVIRSG. The Extracellular segment spans residues 463–741; sequence EWRSEEQLFR…KLEQTQKKDV (279 aa). TPR repeat units lie at residues 482–515, 516–549, 550–583, 584–617, 618–651, 652–685, and 686–719; these read AKVH…NPKY, VHAM…QPDF, AAAW…RRKY, PDCY…KPEH, SLAW…IPND, HSLM…NPNV, and ASYH…DPVA. N-linked (GlcNAc...) asparagine glycosylation is present at N497. An N-linked (GlcNAc...) asparagine glycan is attached at N609. The N-linked (GlcNAc...) asparagine glycan is linked to N725.

This sequence belongs to the TMTC family.

The protein localises to the membrane. Its subcellular location is the endoplasmic reticulum. The enzyme catalyses a di-trans,poly-cis-dolichyl beta-D-mannosyl phosphate + L-seryl-[protein] = 3-O-(alpha-D-mannosyl)-L-seryl-[protein] + a di-trans,poly-cis-dolichyl phosphate + H(+). It catalyses the reaction a di-trans,poly-cis-dolichyl beta-D-mannosyl phosphate + L-threonyl-[protein] = 3-O-(alpha-D-mannosyl)-L-threonyl-[protein] + a di-trans,poly-cis-dolichyl phosphate + H(+). It participates in protein modification; protein glycosylation. In terms of biological role, transfers mannosyl residues to the hydroxyl group of serine or threonine residues. The 4 members of the TMTC family are O-mannosyl-transferases dedicated primarily to the cadherin superfamily, each member seems to have a distinct role in decorating the cadherin domains with O-linked mannose glycans at specific regions. Also acts as O-mannosyl-transferase on other proteins such as PDIA3. The chain is Protein O-mannosyl-transferase TMTC4 from Mus musculus (Mouse).